Reading from the N-terminus, the 349-residue chain is 1-acylglycerol-3-phosphate O-acyltransferase ABHD5 (349 aa).

Ala-2 carries the post-translational modification N-acetylalanine. An AB hydrolase-1 domain is found at Pro-77–Pro-185. The HXXXXD motif motif lies at His-327–Asp-332.

Belongs to the peptidase S33 family. ABHD4/ABHD5 subfamily. As to quaternary structure, interacts with ADRP, PLIN and PNPLA2. Interacts with PLIN5; promotes interaction with PNPLA2.

It is found in the cytoplasm. The protein resides in the lipid droplet. The enzyme catalyses a 1-acyl-sn-glycero-3-phosphate + an acyl-CoA = a 1,2-diacyl-sn-glycero-3-phosphate + CoA. It catalyses the reaction 1-(9Z-octadecenoyl)-sn-glycero-3-phosphate + (9Z)-octadecenoyl-CoA = 1,2-di-(9Z-octadecenoyl)-sn-glycero-3-phosphate + CoA. It carries out the reaction 1-(9Z-octadecenoyl)-sn-glycero-3-phosphate + hexadecanoyl-CoA = 1-(9Z)-octadecenoyl-2-hexadecanoyl-sn-glycero-3-phosphate + CoA. The catalysed reaction is 1-(9Z-octadecenoyl)-sn-glycero-3-phosphate + octadecanoyl-CoA = 1-(9Z-octadecenoyl)-2-octadecanoyl-sn-glycero-3-phosphate + CoA. The enzyme catalyses 1-(9Z-octadecenoyl)-sn-glycero-3-phosphate + (5Z,8Z,11Z,14Z)-eicosatetraenoyl-CoA = 1-(9Z)-octadecenoyl-2-(5Z,8Z,11Z,14Z)-eicosatetraenoyl-sn-glycero-3-phosphate + CoA. It catalyses the reaction eicosanoyl-CoA + 1-(9Z-octadecenoyl)-sn-glycero-3-phosphate = 1-(9Z)-octadecenoyl-2-eicosanoyl-sn-glycero-3-phosphate + CoA. It carries out the reaction 1-hexadecanoyl-sn-glycero-3-phosphate + (9Z)-octadecenoyl-CoA = 1-hexadecanoyl-2-(9Z-octadecenoyl)-sn-glycero-3-phosphate + CoA. The catalysed reaction is 1-octadecanoyl-sn-glycero-3-phosphate + (9Z)-octadecenoyl-CoA = 1-octadecanoyl-2-(9Z-octadecenoyl)-sn-glycero-3-phosphate + CoA. The enzyme catalyses 1-(5Z,8Z,11Z,14Z-eicosatetraenoyl)-sn-glycero-3-phosphate + (9Z)-octadecenoyl-CoA = 1-(5Z,8Z,11Z,14Z)-eicosatetraenoyl-2-(9Z)-octadecenoyl-sn-glycero-3-phosphate + CoA. Its activity is regulated as follows. Acyltransferase activity is inhibited by detergents such as Triton X-100 and 3-[(3-cholamidopropyl)dimethylammonio]-1-propanesulfonate (CHAPS). Acyltransferase activity is inhibited by the presence of magnesium and calcium. Functionally, coenzyme A-dependent lysophosphatidic acid acyltransferase that catalyzes the transfer of an acyl group on a lysophosphatidic acid. Functions preferentially with 1-oleoyl-lysophosphatidic acid followed by 1-palmitoyl-lysophosphatidic acid, 1-stearoyl-lysophosphatidic acid and 1-arachidonoyl-lysophosphatidic acid as lipid acceptor. Functions preferentially with arachidonoyl-CoA followed by oleoyl-CoA as acyl group donors. Functions in phosphatidic acid biosynthesis. May regulate the cellular storage of triacylglycerol through activation of the phospholipase PNPLA2. Involved in keratinocyte differentiation. Regulates lipid droplet fusion. The polypeptide is 1-acylglycerol-3-phosphate O-acyltransferase ABHD5 (Sus scrofa (Pig)).